We begin with the raw amino-acid sequence, 156 residues long: uncharacterized protein (156 aa).

This is an uncharacterized protein from Acheta domesticus (House cricket).